The sequence spans 575 residues: Sialate:O-sulfotransferase 1 (575 aa).

Residues 1–14 lie on the Cytoplasmic side of the membrane; sequence MAKPFFRLQKFLRR. Residues 15-35 traverse the membrane as a helical; Signal-anchor for type II membrane protein segment; sequence TQFLLFFLTAAYLMTGSLLLL. Residues 36 to 575 are Extracellular-facing; sequence QRVRVALPQG…TGLPREYVPR (540 aa). WSC domains lie at 142 to 234 and 245 to 340; these read RGTY…YRVD and TATY…DTRC. N-linked (GlcNAc...) asparagine glycans are attached at residues asparagine 257 and asparagine 348.

This sequence belongs to the WSCD family.

It is found in the golgi apparatus membrane. The catalysed reaction is a ganglioside GM1b + 3'-phosphoadenylyl sulfate = an 8-O-sulfo-ganglioside GM1b + adenosine 3',5'-bisphosphate + H(+). Its function is as follows. Sialate:O-sulfotransferase which catalyzes 8-O-sulfation at the Sia-glycan level using 3'-phosphoadenosine 5'-phosphosulfate (PAPS) as a donor, forming 8-O-sulfated Sia (Sia8S)-glycans. Displays selectivity toward glycolipids such as GM1 gangliosides. In Homo sapiens (Human), this protein is Sialate:O-sulfotransferase 1 (WSCD1).